The chain runs to 443 residues: MDENTVAVKVEEISPVKKKLLFDVPWEDVKRERDTIYRNFSRTAKIKGFRKGKIPRKILELHYKKHAEEETVSSLVSRLYWDALKEHDIRAISQPEIEQQGIEEEKDFSFSATVEVEPQIDPQGYLDMTLSKEEQTVTEDEVDGRLEDIRKMFGTLEEVTEDREIRKGDFVTIDFEGFIDGQNPEEMKRNDYFLEIGSNTMVPGFEDQLLGEKVGTIKEIKIIFPENYQINSNVAGKDATFKVTIKNLKEKKLPELDENFVKNFDKYESLDDLKEDVRKSLFEDHKRKTEADMSKKIMDKLLEMNDFDAPSSYVERQIFFMMMEARKRLITTGMDPAMIDQVSASWHDKYKDEATRIVKSSLLLKSIAQKESIDVTDEEFEERLREIARQYSQDYEKIKDSFNEDMKENVRNDILNKKVFDFIESKASVSMIEKEKTSPEEAN.

Residues 168 to 254 (GDFVTIDFEG…IKNLKEKKLP (87 aa)) form the PPIase FKBP-type domain.

This sequence belongs to the FKBP-type PPIase family. Tig subfamily.

It localises to the cytoplasm. It carries out the reaction [protein]-peptidylproline (omega=180) = [protein]-peptidylproline (omega=0). Functionally, involved in protein export. Acts as a chaperone by maintaining the newly synthesized protein in an open conformation. Functions as a peptidyl-prolyl cis-trans isomerase. In Syntrophus aciditrophicus (strain SB), this protein is Trigger factor.